Here is a 273-residue protein sequence, read N- to C-terminus: Large ribosomal subunit protein uL2cz/uL2cy (273 aa).

Positions asparagine 224 to lysine 273 are disordered. Over residues lysine 262–lysine 273 the composition is skewed to basic and acidic residues.

This sequence belongs to the universal ribosomal protein uL2 family. Part of the 50S ribosomal subunit.

The protein resides in the plastid. It localises to the chloroplast. The chain is Large ribosomal subunit protein uL2cz/uL2cy (rpl2-A) from Piper cenocladum (Ant piper).